We begin with the raw amino-acid sequence, 351 residues long: MTIREKFEQRELDFLSPFACPSAKSKGRKRPEAPCPIRTAFQRDRDRIVYSNAFRRLKHKTQVFLSPLGDHYRTRLTHTLEVAEIARTIARAMRLNEDLTEAVALGHDLGHTPFGHGGETVLKELFHKDFTHSRQSLRVVDCLERRGEGLNLTYEVMDGIAKHSKGFGTIMPNDAGEVASTMEGRVVRVADIIAYLSHDLDDAIRSGVVTRDQVPSHCVEVLGERHRDLVTTMIRDVVYSSGEEDGQMTIKMSDAMHDVMLELRTFLYNNVYRAPVVHNEFVKAKKILSELFDYYMNNVDAFQKAAIEQELFASPEHAAPTKQNVCDLIASMTDRFALTRYQKIFFPTPMV.

One can recognise an HD domain in the interval 75–196 (RLTHTLEVAE…VRVADIIAYL (122 aa)).

The protein belongs to the dGTPase family. Type 2 subfamily.

This Desulfatibacillum aliphaticivorans protein is Deoxyguanosinetriphosphate triphosphohydrolase-like protein.